The sequence spans 61 residues: Large ribosomal subunit protein eL20 (61 aa).

This sequence belongs to the eukaryotic ribosomal protein eL20 family. In terms of assembly, part of the 50S ribosomal subunit. Binds 23S rRNA.

This Methanosarcina acetivorans (strain ATCC 35395 / DSM 2834 / JCM 12185 / C2A) protein is Large ribosomal subunit protein eL20.